The sequence spans 130 residues: Small ribosomal subunit protein uS8 (130 aa).

This sequence belongs to the universal ribosomal protein uS8 family. In terms of assembly, part of the 30S ribosomal subunit.

Its function is as follows. One of the primary rRNA binding proteins, it binds directly to 16S rRNA central domain where it helps coordinate assembly of the platform of the 30S subunit. This is Small ribosomal subunit protein uS8 from Methanococcus maripaludis (strain C7 / ATCC BAA-1331).